We begin with the raw amino-acid sequence, 508 residues long: Photosystem II CP47 reaction center protein (508 aa).

A run of 6 helical transmembrane segments spans residues 21–36 (SVHI…WAGS), 101–115 (IVFS…IWHW), 140–156 (GIHL…FGAF), 203–218 (IAAG…FHLS), 237–252 (VLSS…AFVV), and 457–472 (TFAL…HGAR).

Belongs to the PsbB/PsbC family. PsbB subfamily. In terms of assembly, PSII is composed of 1 copy each of membrane proteins PsbA, PsbB, PsbC, PsbD, PsbE, PsbF, PsbH, PsbI, PsbJ, PsbK, PsbL, PsbM, PsbT, PsbX, PsbY, PsbZ, Psb30/Ycf12, at least 3 peripheral proteins of the oxygen-evolving complex and a large number of cofactors. It forms dimeric complexes. It depends on Binds multiple chlorophylls. PSII binds additional chlorophylls, carotenoids and specific lipids. as a cofactor.

The protein resides in the plastid. The protein localises to the chloroplast thylakoid membrane. Its function is as follows. One of the components of the core complex of photosystem II (PSII). It binds chlorophyll and helps catalyze the primary light-induced photochemical processes of PSII. PSII is a light-driven water:plastoquinone oxidoreductase, using light energy to abstract electrons from H(2)O, generating O(2) and a proton gradient subsequently used for ATP formation. The sequence is that of Photosystem II CP47 reaction center protein from Oryza nivara (Indian wild rice).